Reading from the N-terminus, the 135-residue chain is Sex-regulated protein janus-A (135 aa).

Residue K37 coordinates substrate. H63 functions as the Proton acceptor in the catalytic mechanism. 104–106 (SQG) is a substrate binding site.

Belongs to the janus family. Somatic and germline cells. Isoform B is expressed in both sexes and in somatic and germ line cells. Isoform A is expressed in males and is germ line specific.

Its function is as follows. JanA and janB regulate somatic sex differentiation. This Drosophila melanogaster (Fruit fly) protein is Sex-regulated protein janus-A (janA).